The following is a 602-amino-acid chain: MAAAPSATAPKHNYTLGTNASQLELYKYLKTVPPIPELRQAVTIKKYEEASVDDTLYPLIDEHQIIMVVGAFFGDEGKGKTVDAVARHPACTCVARVNSGENAGHTVFDDIGRKYVFNLAPSSLLTPNTRNYVSSECVMDPISFMEREIGQFIKSNMPYKDKLFVGNVFVVTPYHKLLDLLGSAPNSSTLKGMSPIHASKVTKRGIRLDHIFNDEGVLRARLAKDMDTYYGLLKVKGLTDKDVVRRCQEENADGVERVPGYVVDFARAENKIDYLVKLYTERVKNNKDFPRRCDVTHELRAALARGEKLLLEGPQSYWLSNAREKFWESTTSADTTAGGLLASAQFNFQRYKVLVINVHKAPGSSRVGIGANPSSFVPQDYYSAQDIKTLEALPKGGCVDFDKIQNFFYTKAFNTESKTFNGIYEPLEYEDATGKYNIGVAMSIASARHHGECGAVTKKPRVCGFFDCVLHFEVNAVQGPYLSISAVDRGDDYDRIGITIAYVYYDVGNKMVDANGRVYKNGDIIKAGDPVPCEMALYHCYPIVKVINGWKGAPIAASKRRPNEPLPKGVCEFIANVEFFTGAKVISIGNGPRGSDIIYLKQ.

GTP is bound by residues 74 to 80 and 104 to 106; these read GDEGKGK and GHT. The Proton acceptor role is filled by D75. Mg(2+) is bound by residues D75 and G104. Residues 75–78, 102–105, T189, K203, Q315, T331, and K459 each bind IMP; these read DEGK and NAGH. H105 serves as the catalytic Proton donor. 455–461 contributes to the substrate binding site; sequence AVTKKPR. GTP-binding positions include R461 and 589–591; that span reads GNG.

It belongs to the adenylosuccinate synthetase family. As to quaternary structure, homodimer. Mg(2+) serves as cofactor.

It is found in the cytoplasm. It catalyses the reaction IMP + L-aspartate + GTP = N(6)-(1,2-dicarboxyethyl)-AMP + GDP + phosphate + 2 H(+). It participates in purine metabolism; AMP biosynthesis via de novo pathway; AMP from IMP: step 1/2. Functionally, plays an important role in the salvage pathway for purine nucleotide biosynthesis. Catalyzes the first committed step in the biosynthesis of AMP from IMP. The protein is Adenylosuccinate synthetase of Trypanosoma brucei brucei (strain 927/4 GUTat10.1).